The primary structure comprises 723 residues: Catalase-peroxidase (723 aa).

The segment at residues Trp-97 to Tyr-225 is a cross-link (tryptophyl-tyrosyl-methioninium (Trp-Tyr) (with M-251)). The active-site Proton acceptor is His-98. Positions Tyr-225 to Met-251 form a cross-link, tryptophyl-tyrosyl-methioninium (Tyr-Met) (with W-97). Position 266 (His-266) interacts with heme b.

Belongs to the peroxidase family. Peroxidase/catalase subfamily. In terms of assembly, homodimer or homotetramer. The cofactor is heme b. Post-translationally, formation of the three residue Trp-Tyr-Met cross-link is important for the catalase, but not the peroxidase activity of the enzyme.

It catalyses the reaction H2O2 + AH2 = A + 2 H2O. The enzyme catalyses 2 H2O2 = O2 + 2 H2O. Functionally, bifunctional enzyme with both catalase and broad-spectrum peroxidase activity. Involved in tumorigenesis. This Rhizobium radiobacter (Agrobacterium tumefaciens) protein is Catalase-peroxidase.